A 778-amino-acid chain; its full sequence is Molybdenum cofactor sulfurase (778 aa).

K235 is modified (N6-(pyridoxal phosphate)lysine). C399 is a catalytic residue. 2 disordered regions span residues 576-596 and 654-673; these read LSKNPSLFRSSSSRSRSSRVC and ARPALPGSFPPSPPDSDTEK. The span at 584 to 594 shows a compositional bias: low complexity; it reads RSSSSRSRSSR. Residues 651-778 enclose the MOSC domain; it reads LPTARPALPG…ETAERARSRL (128 aa).

The protein belongs to the class-V pyridoxal-phosphate-dependent aminotransferase family. MOCOS subfamily. It depends on pyridoxal 5'-phosphate as a cofactor.

It carries out the reaction Mo-molybdopterin + L-cysteine + AH2 = thio-Mo-molybdopterin + L-alanine + A + H2O. Its pathway is cofactor biosynthesis; molybdopterin biosynthesis. In terms of biological role, sulfurates the molybdenum cofactor. Sulfation of molybdenum is essential for xanthine dehydrogenase (XDH) and aldehyde oxidase (ADO) enzymes in which molybdenum cofactor is liganded by 1 oxygen and 1 sulfur atom in active form. The protein is Molybdenum cofactor sulfurase of Chaetomium globosum (strain ATCC 6205 / CBS 148.51 / DSM 1962 / NBRC 6347 / NRRL 1970) (Soil fungus).